The primary structure comprises 117 residues: Large ribosomal subunit protein bL20c (117 aa).

This sequence belongs to the bacterial ribosomal protein bL20 family.

Its subcellular location is the plastid. It is found in the chloroplast. Binds directly to 23S ribosomal RNA and is necessary for the in vitro assembly process of the 50S ribosomal subunit. It is not involved in the protein synthesizing functions of that subunit. The protein is Large ribosomal subunit protein bL20c of Drimys granadensis.